The chain runs to 213 residues: uncharacterized protein (213 aa).

S-adenosyl-L-methionine is bound by residues glycine 53, glutamate 74, and aspartate 96.

Belongs to the methyltransferase superfamily. YrrT family.

Could be a S-adenosyl-L-methionine-dependent methyltransferase. This is an uncharacterized protein from Oceanobacillus iheyensis (strain DSM 14371 / CIP 107618 / JCM 11309 / KCTC 3954 / HTE831).